Reading from the N-terminus, the 335-residue chain is Phosphatidylcholine-sterol acyltransferase (335 aa).

An N-terminal signal peptide occupies residues 1–18 (MKKWFVCLLGLVALTVQA). Serine 34 (nucleophile) is an active-site residue. Residues aspartate 306 and histidine 309 contribute to the active site.

The protein belongs to the 'GDSL' lipolytic enzyme family.

It carries out the reaction a sterol + a 1,2-diacyl-sn-glycero-3-phosphocholine = a sterol ester + a 1-acyl-sn-glycero-3-phosphocholine. In terms of biological role, fatty acid transfer between phosphatidylcholine and cholesterol. The chain is Phosphatidylcholine-sterol acyltransferase from Aeromonas hydrophila.